A 79-amino-acid chain; its full sequence is Short neurotoxin 7 (79 aa).

An N-terminal signal peptide occupies residues 1–21 (MKTLLLTLVMVTIMCLDLGYT). 4 cysteine pairs are disulfide-bonded: Cys24/Cys41, Cys34/Cys59, Cys63/Cys71, and Cys72/Cys77.

It belongs to the three-finger toxin family. Short-chain subfamily. Type III alpha-neurotoxin sub-subfamily. In terms of tissue distribution, expressed by the venom gland.

It localises to the secreted. Binds with high affinity to muscle nicotinic acetylcholine receptor (nAChR) and hinders acetylcholine binding to the receptor, thereby impairing neuromuscular transmission. Competes with the binding of alpha-bungarotoxin on muscle AChR (from Torpedo) (IC(50)=0.30 uM). In vivo, causes muscle paralysis, spasms and increased respiration. This chain is Short neurotoxin 7, found in Pseudonaja textilis (Eastern brown snake).